Reading from the N-terminus, the 287-residue chain is ATP synthase gamma chain (287 aa).

This sequence belongs to the ATPase gamma chain family. In terms of assembly, F-type ATPases have 2 components, CF(1) - the catalytic core - and CF(0) - the membrane proton channel. CF(1) has five subunits: alpha(3), beta(3), gamma(1), delta(1), epsilon(1). CF(0) has three main subunits: a, b and c.

It is found in the cell inner membrane. Produces ATP from ADP in the presence of a proton gradient across the membrane. The gamma chain is believed to be important in regulating ATPase activity and the flow of protons through the CF(0) complex. The protein is ATP synthase gamma chain of Yersinia pestis.